Here is a 390-residue protein sequence, read N- to C-terminus: S-adenosylmethionine synthase 4 (390 aa).

Position 9 (Glu-9) interacts with Mg(2+). His-15 contacts ATP. Glu-43 is a K(+) binding site. The L-methionine site is built by Glu-56 and Gln-99. ATP contacts are provided by residues 167-169, 235-238, Asp-246, 252-253, Ala-269, Lys-273, and Lys-277; these read DGK, SGRF, and RK. Residue Asp-246 coordinates L-methionine. Lys-277 is an L-methionine binding site.

It belongs to the AdoMet synthase family. Homotetramer. Mn(2+) is required as a cofactor. The cofactor is Mg(2+). Requires Co(2+) as cofactor. It depends on K(+) as a cofactor.

It localises to the cytoplasm. It carries out the reaction L-methionine + ATP + H2O = S-adenosyl-L-methionine + phosphate + diphosphate. It participates in amino-acid biosynthesis; S-adenosyl-L-methionine biosynthesis; S-adenosyl-L-methionine from L-methionine: step 1/1. Functionally, catalyzes the formation of S-adenosylmethionine from methionine and ATP. The reaction comprises two steps that are both catalyzed by the same enzyme: formation of S-adenosylmethionine (AdoMet) and triphosphate, and subsequent hydrolysis of the triphosphate. In Populus trichocarpa (Western balsam poplar), this protein is S-adenosylmethionine synthase 4 (METK4).